Reading from the N-terminus, the 201-residue chain is Protein VirD3 (201 aa).

Disordered regions lie at residues 28–51 and 139–171; these read ASSSALSNVQGDVRDRPIPTSSSR and RVNSDRRLPTDAENHPETRDPRKGRGSHGVTPA. Basic and acidic residues predominate over residues 141-161; the sequence is NSDRRLPTDAENHPETRDPRK.

The protein is Protein VirD3 (virD3) of Rhizobium radiobacter (Agrobacterium tumefaciens).